The sequence spans 563 residues: Arginine--tRNA ligase (563 aa).

The 'HIGH' region signature appears at 121 to 131 (PNIAKPMSMGH).

It belongs to the class-I aminoacyl-tRNA synthetase family. In terms of assembly, monomer.

It is found in the cytoplasm. It catalyses the reaction tRNA(Arg) + L-arginine + ATP = L-arginyl-tRNA(Arg) + AMP + diphosphate. The chain is Arginine--tRNA ligase from Leuconostoc citreum (strain KM20).